A 336-amino-acid polypeptide reads, in one-letter code: Probable allantoicase (336 aa).

It belongs to the allantoicase family.

The enzyme catalyses allantoate + H2O = (S)-ureidoglycolate + urea. Its pathway is nitrogen metabolism; (S)-allantoin degradation; (S)-ureidoglycolate from allantoate (aminidohydrolase route): step 1/1. The chain is Probable allantoicase from Acinetobacter baumannii (strain ACICU).